The sequence spans 303 residues: T-box protein 38 (303 aa).

The segment at residues Leu14 to Ser195 is a DNA-binding region (T-box). The disordered stretch occupies residues Phe193–Ser225. Residues Asp204–Pro213 are compositionally biased toward low complexity.

It localises to the nucleus. Transcription factor. Required for mesodermal induction, acting redundantly with transcription factor tbx-37. Together with tbx-37, acts by inducing cell fates in the AB lineage, thereby playing a role in development of the anterior pharynx. This chain is T-box protein 38 (tbx-38), found in Caenorhabditis elegans.